Reading from the N-terminus, the 389-residue chain is ELAV-like protein 2 (389 aa).

3 consecutive RRM domains span residues 66–145 (TNLI…YARP), 153–233 (ANLY…FANN), and 306–384 (WCIF…FKTS).

The protein belongs to the RRM elav family. As to quaternary structure, part of a ribonucleoprotein (RNP) complex, at least composed of elavl1/elrA and/or elavl2/elrB, igf2bp3/vg1RBP, ddx6/Xp54, ybx2/frgy2, lsm14b/rap55b and, in a subset of RNP complexes, stau1/staufen. Binds RNA as a homooligomer. In terms of tissue distribution, expressed in brain, testis and ovary. Ovarian expression is restricted to follicle cells surrounding the oocyte. From the early tailbud stage, expression is neural-specific and is seen in both the central and peripheral nervous system in differentiating neurons but not proliferating precursors. Expressed in the retina from stage 32 with expression becoming restricted to the ganglion cell layer by later stages.

It is found in the cytoplasm. The protein localises to the cell cortex. Functionally, binds to poly-U elements and AU-rich elements (AREs) in the 3'-UTR of target mRNAs. Required for the vegetal localization of vg1 mRNA. Probably required for nervous system development. This is ELAV-like protein 2 (elavl2) from Xenopus laevis (African clawed frog).